We begin with the raw amino-acid sequence, 372 residues long: Glutamate 5-kinase (372 aa).

Residue Lys-14 coordinates ATP. Ser-54, Asp-141, and Asn-153 together coordinate substrate. Position 173–174 (173–174) interacts with ATP; the sequence is TD. One can recognise a PUA domain in the interval 280 to 358; that stretch reads RGRVVIDGGA…SEIESVLGHL (79 aa).

Belongs to the glutamate 5-kinase family.

The protein resides in the cytoplasm. It carries out the reaction L-glutamate + ATP = L-glutamyl 5-phosphate + ADP. It functions in the pathway amino-acid biosynthesis; L-proline biosynthesis; L-glutamate 5-semialdehyde from L-glutamate: step 1/2. In terms of biological role, catalyzes the transfer of a phosphate group to glutamate to form L-glutamate 5-phosphate. This Cupriavidus taiwanensis (strain DSM 17343 / BCRC 17206 / CCUG 44338 / CIP 107171 / LMG 19424 / R1) (Ralstonia taiwanensis (strain LMG 19424)) protein is Glutamate 5-kinase.